A 439-amino-acid polypeptide reads, in one-letter code: Ribosomal protein uS12 methylthiotransferase RimO (439 aa).

The 113-residue stretch at 7–119 (KQLCLISLGC…IDIMIAKKQN (113 aa)) folds into the MTTase N-terminal domain. Residues cysteine 16, cysteine 50, cysteine 82, cysteine 151, cysteine 155, and cysteine 158 each contribute to the [4Fe-4S] cluster site. Residues 137-368 (TGSSVHAYVK…ALKHQNHSFK (232 aa)) enclose the Radical SAM core domain.

It belongs to the methylthiotransferase family. RimO subfamily. Requires [4Fe-4S] cluster as cofactor.

The protein localises to the cytoplasm. The catalysed reaction is L-aspartate(89)-[ribosomal protein uS12]-hydrogen + (sulfur carrier)-SH + AH2 + 2 S-adenosyl-L-methionine = 3-methylsulfanyl-L-aspartate(89)-[ribosomal protein uS12]-hydrogen + (sulfur carrier)-H + 5'-deoxyadenosine + L-methionine + A + S-adenosyl-L-homocysteine + 2 H(+). In terms of biological role, catalyzes the methylthiolation of an aspartic acid residue of ribosomal protein uS12. The polypeptide is Ribosomal protein uS12 methylthiotransferase RimO (Helicobacter pylori (strain ATCC 700392 / 26695) (Campylobacter pylori)).